Reading from the N-terminus, the 541-residue chain is Chaperonin GroEL (541 aa).

ATP contacts are provided by residues 29 to 32 (TLGP), 86 to 90 (DGTTT), Gly413, 478 to 480 (NAA), and Asp494.

This sequence belongs to the chaperonin (HSP60) family. As to quaternary structure, forms a cylinder of 14 subunits composed of two heptameric rings stacked back-to-back. Interacts with the co-chaperonin GroES.

It is found in the cytoplasm. The enzyme catalyses ATP + H2O + a folded polypeptide = ADP + phosphate + an unfolded polypeptide.. Its function is as follows. Together with its co-chaperonin GroES, plays an essential role in assisting protein folding. The GroEL-GroES system forms a nano-cage that allows encapsulation of the non-native substrate proteins and provides a physical environment optimized to promote and accelerate protein folding. This is Chaperonin GroEL from Agathobacter rectalis (strain ATCC 33656 / DSM 3377 / JCM 17463 / KCTC 5835 / VPI 0990) (Eubacterium rectale).